Here is an 806-residue protein sequence, read N- to C-terminus: SH3-containing GRB2-like protein 3-interacting protein 1 (806 aa).

Disordered regions lie at residues M1 to K115 and S142 to T278. Basic and acidic residues-rich tracts occupy residues R16–G32 and P40–K54. A phosphoserine mark is found at S78, S104, S105, S107, S149, S151, S156, and S169. T180 and T182 each carry phosphothreonine. Phosphoserine occurs at positions 236 and 243. The span at T245–P260 shows a compositional bias: pro residues. Residues T247 and T259 each carry the phosphothreonine modification. Phosphoserine occurs at positions 265, 274, 287, 289, 300, 316, and 319. The span at S265 to A276 shows a compositional bias: polar residues. Basic and acidic residues predominate over residues F315–T324. A disordered region spans residues F315–G533. A phosphothreonine mark is found at T324, T328, and T335. Residues T335–D345 are compositionally biased toward low complexity. At A338 the chain carries Phosphoserine. The segment covering S346–V369 has biased composition (pro residues). At S371 the chain carries Phosphoserine. Over residues E377 to Y392 the composition is skewed to basic and acidic residues. Residue S398 is modified to Phosphoserine. T409 carries the phosphothreonine modification. Residues T436–S453 show a composition bias toward low complexity. Positions T454–K473 are enriched in pro residues. Low complexity-rich tracts occupy residues S480–S490 and P497–T520. Residues S484, S505, and G533 each carry the phosphoserine modification. Residues T537–D805 enclose the MHD domain. 4 interaction with DPF motifs-containing proteins regions span residues P539–T545, S571–P573, T645–N648, and S791–R796. The necessary and sufficient to mediate interaction with CANX stretch occupies residues M627–N806.

In terms of assembly, interacts with proteins essential or regulating the formation of functional clathrin-coated pits. Interacts with CANX. Interacts with AP2A1. Interacts with EPS15. Interacts with SH3GL3. Interacts with AMPH. Interacts with ITSN1 (via SH3 domains). Interacts with and REPS1. Detected in brain, spinal cord and cerebellum.

The protein localises to the membrane. It is found in the clathrin-coated pit. In terms of biological role, may function in clathrin-mediated endocytosis. Has both a membrane binding/tubulating activity and the ability to recruit proteins essential to the formation of functional clathrin-coated pits. Has a preference for membranes enriched in phosphatidylserine and phosphoinositides and is required for the endocytosis of the transferrin receptor. May also bind tubulin. May play a role in the regulation of energy homeostasis. This chain is SH3-containing GRB2-like protein 3-interacting protein 1 (Sgip1), found in Mus musculus (Mouse).